An 800-amino-acid chain; its full sequence is Internalin A (800 aa).

The signal sequence occupies residues 1–35 (MRKKRYVWLKSILVAILVFGSGVWINTSNGTNAQA). The region spanning 36-76 (ATITQDTPINQIFTDAALAEKMKTVLGKTNVTDTVSQTDLD) is the LRRNT domain. LRR repeat units lie at residues 77–98 (QVTT…EYLN), 99–120 (NLTQ…KDLT), 121–142 (KLVD…ANLT), 143–164 (NLTG…KNLT), 165–186 (NLNR…SGLT), 187–207 (NLQQ…ANLT), 208–229 (TLER…AKLT), 230–251 (NLES…GILT), 252–273 (NLDE…ASLT), 274–295 (NLTD…SGLT), 296–317 (KLTE…AGLT), 318–339 (ALTN…SNLK), 340–361 (NLTY…SSLT), 362–383 (KLQR…ANLT), and 384–405 (NINW…ANLT). Residues 416-505 (AWTNAPVNYK…AIFNAKFHVD (90 aa)) form the LRRCT domain. The stretch at 518–587 (LLTEPAKPVK…TTSQTVDYQG (70 aa)) is one B-1 repeat. The segment at 518 to 706 (LLTEPAKPVK…ITLYAQFTKN (189 aa)) is 3 X approximate tandem repeats, type B. One copy of the B-2 repeat lies at 588-657 (LLQEPTPPTK…STTQAVDYQG (70 aa)). The B-3 repeat unit spans residues 658–706 (LLKEPKAPTKAGYTFKGWYDEKTDGKKWDFATDKMPANDITLYAQFTKN). Positions 705-757 (KNPVAPPTTGGNTPPTTNNGGNTTPPSANIPGSDTSNTSTGNSASTTSTMNAY) are disordered. A compositionally biased stretch (low complexity) spans 711–753 (PTTGGNTPPTTNNGGNTTPPSANIPGSDTSNTSTGNSASTTST). An LPXTG sorting signal motif is present at residues 767–771 (LPTTG). T770 is subject to Pentaglycyl murein peptidoglycan amidated threonine. The propeptide at 771-800 (GDSDNALYLLLGLLAVGTAMALTKKARASK) is removed by sortase A.

Belongs to the internalin family.

It localises to the secreted. Its subcellular location is the cell wall. Its function is as follows. Mediates the entry of Listeria monocytogenes into cells. Binds to host receptor cadherin-1 (E-cadherin, CDH1). This is Internalin A (inlA) from Listeria monocytogenes serotype 1/2a (strain 10403S).